Consider the following 287-residue polypeptide: Thymidylate synthase (287 aa).

Arg-21 lines the dUMP pocket. His-51 is a (6R)-5,10-methylene-5,6,7,8-tetrahydrofolate binding site. Residue 150 to 151 (RR) coordinates dUMP. The Nucleophile role is filled by Cys-170. Residues 190-193 (RSGD), Asn-201, and 231-233 (HIY) each bind dUMP. Asp-193 is a binding site for (6R)-5,10-methylene-5,6,7,8-tetrahydrofolate. Residue Ala-286 coordinates (6R)-5,10-methylene-5,6,7,8-tetrahydrofolate.

This sequence belongs to the thymidylate synthase family. Bacterial-type ThyA subfamily. Homodimer.

Its subcellular location is the cytoplasm. It carries out the reaction dUMP + (6R)-5,10-methylene-5,6,7,8-tetrahydrofolate = 7,8-dihydrofolate + dTMP. The protein operates within pyrimidine metabolism; dTTP biosynthesis. Its function is as follows. Catalyzes the reductive methylation of 2'-deoxyuridine-5'-monophosphate (dUMP) to 2'-deoxythymidine-5'-monophosphate (dTMP) while utilizing 5,10-methylenetetrahydrofolate (mTHF) as the methyl donor and reductant in the reaction, yielding dihydrofolate (DHF) as a by-product. This enzymatic reaction provides an intracellular de novo source of dTMP, an essential precursor for DNA biosynthesis. This Mycoplasma pneumoniae (strain ATCC 29342 / M129 / Subtype 1) (Mycoplasmoides pneumoniae) protein is Thymidylate synthase.